A 583-amino-acid chain; its full sequence is Exonuclease 3'-5' domain-containing protein 2 (583 aa).

At 1-11 (MTRESAVATKR) the chain is on the mitochondrial intermembrane side. Residues 12–29 (NWAILAAGVGLVYVLVRH) form a helical membrane-spanning segment. The Cytoplasmic segment spans residues 30 to 583 (RHRLLCPLRR…AGLDAKIKET (554 aa)). One can recognise a 3'-5' exonuclease domain in the interval 62–228 (TTQWVLNELK…AIYQKLCRDL (167 aa)). Residues aspartate 83, glutamate 85, and aspartate 213 each coordinate a divalent metal cation. Polar residues predominate over residues 266–281 (GSGVTRSKGSTQSKSN). A disordered region spans residues 266 to 286 (GSGVTRSKGSTQSKSNKWVPK).

This sequence belongs to the EXD2 family. In terms of assembly, homodimer. It depends on Mg(2+) as a cofactor. Mn(2+) is required as a cofactor.

It localises to the mitochondrion membrane. Functionally, 3'-5' exoribonuclease required for mitochondrial metabolism. This is Exonuclease 3'-5' domain-containing protein 2 from Drosophila melanogaster (Fruit fly).